The sequence spans 192 residues: ATP-dependent Clp protease proteolytic subunit 1 (192 aa).

Serine 92 functions as the Nucleophile in the catalytic mechanism. The active site involves histidine 117.

This sequence belongs to the peptidase S14 family. In terms of assembly, fourteen ClpP subunits assemble into 2 heptameric rings which stack back to back to give a disk-like structure with a central cavity, resembling the structure of eukaryotic proteasomes.

It is found in the cytoplasm. The enzyme catalyses Hydrolysis of proteins to small peptides in the presence of ATP and magnesium. alpha-casein is the usual test substrate. In the absence of ATP, only oligopeptides shorter than five residues are hydrolyzed (such as succinyl-Leu-Tyr-|-NHMec, and Leu-Tyr-Leu-|-Tyr-Trp, in which cleavage of the -Tyr-|-Leu- and -Tyr-|-Trp bonds also occurs).. Cleaves peptides in various proteins in a process that requires ATP hydrolysis. Has a chymotrypsin-like activity. Plays a major role in the degradation of misfolded proteins. This Chlamydia muridarum (strain MoPn / Nigg) protein is ATP-dependent Clp protease proteolytic subunit 1.